A 402-amino-acid chain; its full sequence is Deoxyguanosinetriphosphate triphosphohydrolase-like protein 2 (402 aa).

The region spanning 72–215 is the HD domain; the sequence is RLTHSLEVAQ…MDLADEIAYA (144 aa).

This sequence belongs to the dGTPase family. Type 2 subfamily.

The polypeptide is Deoxyguanosinetriphosphate triphosphohydrolase-like protein 2 (Vibrio cholerae serotype O1 (strain ATCC 39315 / El Tor Inaba N16961)).